The primary structure comprises 466 residues: 3-isopropylmalate dehydratase large subunit (466 aa).

[4Fe-4S] cluster contacts are provided by cysteine 347, cysteine 407, and cysteine 410.

It belongs to the aconitase/IPM isomerase family. LeuC type 1 subfamily. Heterodimer of LeuC and LeuD. [4Fe-4S] cluster is required as a cofactor.

The enzyme catalyses (2R,3S)-3-isopropylmalate = (2S)-2-isopropylmalate. It participates in amino-acid biosynthesis; L-leucine biosynthesis; L-leucine from 3-methyl-2-oxobutanoate: step 2/4. In terms of biological role, catalyzes the isomerization between 2-isopropylmalate and 3-isopropylmalate, via the formation of 2-isopropylmaleate. This Escherichia coli O9:H4 (strain HS) protein is 3-isopropylmalate dehydratase large subunit.